We begin with the raw amino-acid sequence, 498 residues long: MKLNKMFLVGALLSLGFASCSKEGNGPAPDSSSTADTHMSVSMSLPQHNRAGDNDYNPIGEYGGVDKINDLTVYVVGDGKIDVRKLSTADLQVNQGASTTSIVTAPFQVKSGEKTVYAIVNITPKVEAALNAATNAADLKVAYEAAYAAFSDAGSEIATLVNNQDQMIMSGKPVVQTILPNVSAANASVQNKVPIIVKRAAIRASMTITQQPVNGAYEIKALRPGNVEVVIATVSDLKWSVAQYEKKYYLQQKDNALSPAASFVPASTNDYNGANGAMKHYDYSQLANRITVHQLNAPYSVTDVPNVAYKYVSETTHADNDYRKGNTTYILVKGKLKPVAAMWADGEQAAYQEGGDLFLGLVTGKFYANEANANAANPASGGAGNPRVVTYKAAAVYYYAWLNPNTLDPTTWTMSPARRNNIYNVNISKFRNIGLSGNPFVPTDPDPNNPDTPDNPDTPDPEDPDTPNPEEPLPVQKTYMVVDVTVTPWTLHNYDIEF.

The signal sequence occupies residues 1-19 (MKLNKMFLVGALLSLGFAS). The N-palmitoyl cysteine moiety is linked to residue C20. A lipid anchor (S-diacylglycerol cysteine) is attached at C20. The propeptide occupies 20–50 (CSKEGNGPAPDSSSTADTHMSVSMSLPQHNR). The tract at residues 436 to 476 (SGNPFVPTDPDPNNPDTPDNPDTPDPEDPDTPNPEEPLPVQ) is disordered.

The protein belongs to the bacteroidetes fimbrillin superfamily. FimA/Mfa1 family. Structural component of the fimbrial stalk. Minor fimbriae are composed of a structural subunit, such as the 53 kDa fimbrillin, and the accessory subunits Mfa3, Mfa4 and Mfa5. Fimbrium assembly occurs by linear, head-to-tail oligomerization of fimbrial subunits. This is mediated via insertion of a C-terminal beta-strand from one subunit into a groove in the N-terminal domain of the following subunit.

It is found in the fimbrium. It localises to the cell outer membrane. Its function is as follows. Structural subunit of the minor fimbriae. These filamentous pili are attached to the cell surface; they mediate biofilm formation, adhesion onto host cells and onto other bacteria that are part of the oral microbiome. They play an important role in invasion of periodontal tissues and are recognized as major virulence factors. Mfa1 orthologs from different strains have highly divergent sequences, and this correlates with pathogenicity. The sequence is that of Minor fimbrium subunit Mfa1 from Porphyromonas gingivalis (Bacteroides gingivalis).